Reading from the N-terminus, the 78-residue chain is Acyl carrier protein (78 aa).

A Carrier domain is found at 2–77; the sequence is SNFEERVKKI…AAIDYVVSSA (76 aa). S37 carries the O-(pantetheine 4'-phosphoryl)serine modification.

Belongs to the acyl carrier protein (ACP) family. In terms of processing, 4'-phosphopantetheine is transferred from CoA to a specific serine of apo-ACP by AcpS. This modification is essential for activity because fatty acids are bound in thioester linkage to the sulfhydryl of the prosthetic group.

It localises to the cytoplasm. It functions in the pathway lipid metabolism; fatty acid biosynthesis. Functionally, carrier of the growing fatty acid chain in fatty acid biosynthesis. Is probably involved in the biosynthesis of docosahexaenoic acid (DHA) which is produced by this bacterium as a fatty acyl component in its membrane lipid. The protein is Acyl carrier protein of Moritella marina (Vibrio marinus).